The following is an 87-amino-acid chain: U1-theraphotoxin-Ct1a (87 aa).

The N-terminal stretch at 1-23 (MKTFTLIAILTCAVLVIFHAAAA) is a signal peptide. A propeptide spanning residues 24–48 (EELEVQDVIQPEDTLTGLATLDEDR) is cleaved from the precursor.

It belongs to the neurotoxin 12 (Hwtx-2) family. 03 (juruin) subfamily. Contains 3 disulfide bonds. Two different connectivities are observed in similar proteins (C1-C3, C2-C5, C4-C6 or C1-C4, C2-C5, C3-C6). Expressed by the venom gland.

Its subcellular location is the secreted. In terms of biological role, this toxin causes paralysis and death to sheep blowflies. It may inhibit voltage-gated calcium channels. This Coremiocnemis tropix (Australian tarantula spider) protein is U1-theraphotoxin-Ct1a.